A 956-amino-acid polypeptide reads, in one-letter code: Valine--tRNA ligase (956 aa).

The short motif at 43–53 (PNITGNLHIGH) is the 'HIGH' region element. Residues 556–560 (KMSKS) carry the 'KMSKS' region motif. Lys559 is a binding site for ATP. Positions 889-920 (PKEKELKNLNKEISKIQLAINKLQQRLSNEEF) form a coiled coil.

Belongs to the class-I aminoacyl-tRNA synthetase family. ValS type 1 subfamily. Monomer.

The protein resides in the cytoplasm. It carries out the reaction tRNA(Val) + L-valine + ATP = L-valyl-tRNA(Val) + AMP + diphosphate. In terms of biological role, catalyzes the attachment of valine to tRNA(Val). As ValRS can inadvertently accommodate and process structurally similar amino acids such as threonine, to avoid such errors, it has a 'posttransfer' editing activity that hydrolyzes mischarged Thr-tRNA(Val) in a tRNA-dependent manner. In Buchnera aphidicola subsp. Baizongia pistaciae (strain Bp), this protein is Valine--tRNA ligase.